The primary structure comprises 1296 residues: Phosphoribosylformylglycinamidine synthase (1296 aa).

The segment at 304-323 (WPGAATGSGGEIRDEGATGR) is disordered. Residues 306–317 (GAATGSGGEIRD) and alanine 677 each bind ATP. Mg(2+) contacts are provided by aspartate 678, glutamate 717, asparagine 721, and aspartate 885. Serine 887 serves as a coordination point for ATP. Residues 1000-1013 (PDCADQEHQAKQDE) are compositionally biased toward basic and acidic residues. A disordered region spans residues 1000–1019 (PDCADQEHQAKQDESDPGLN). The Glutamine amidotransferase type-1 domain occupies 1043 to 1296 (VAVLREQGVN…MFRNARKQLG (254 aa)). Cysteine 1136 (nucleophile) is an active-site residue. Residues histidine 1261 and glutamate 1263 contribute to the active site.

In the N-terminal section; belongs to the FGAMS family. Monomer.

Its subcellular location is the cytoplasm. The catalysed reaction is N(2)-formyl-N(1)-(5-phospho-beta-D-ribosyl)glycinamide + L-glutamine + ATP + H2O = 2-formamido-N(1)-(5-O-phospho-beta-D-ribosyl)acetamidine + L-glutamate + ADP + phosphate + H(+). It functions in the pathway purine metabolism; IMP biosynthesis via de novo pathway; 5-amino-1-(5-phospho-D-ribosyl)imidazole from N(2)-formyl-N(1)-(5-phospho-D-ribosyl)glycinamide: step 1/2. In terms of biological role, phosphoribosylformylglycinamidine synthase involved in the purines biosynthetic pathway. Catalyzes the ATP-dependent conversion of formylglycinamide ribonucleotide (FGAR) and glutamine to yield formylglycinamidine ribonucleotide (FGAM) and glutamate. The chain is Phosphoribosylformylglycinamidine synthase from Yersinia pseudotuberculosis serotype I (strain IP32953).